A 388-amino-acid chain; its full sequence is 3-dehydroquinate synthase (388 aa).

Belongs to the archaeal-type DHQ synthase family.

The catalysed reaction is 2-amino-2,3,7-trideoxy-D-lyxo-hept-6-ulosonate + NAD(+) + H2O = 3-dehydroquinate + NH4(+) + NADH + H(+). In terms of biological role, catalyzes the oxidative deamination and cyclization of 2-amino-3,7-dideoxy-D-threo-hept-6-ulosonic acid (ADH) to yield 3-dehydroquinate (DHQ), which is fed into the canonical shikimic pathway of aromatic amino acid biosynthesis. In Natronomonas pharaonis (strain ATCC 35678 / DSM 2160 / CIP 103997 / JCM 8858 / NBRC 14720 / NCIMB 2260 / Gabara) (Halobacterium pharaonis), this protein is 3-dehydroquinate synthase.